The following is an 87-amino-acid chain: Glutaredoxin (87 aa).

The region spanning 1 to 87 (MFVVIFGRPG…LMKEQFGIVA (87 aa)) is the Glutaredoxin domain. A disulfide bridge links Cys11 with Cys14.

The protein belongs to the glutaredoxin family. As to quaternary structure, monomer.

It is found in the cytoplasm. Its function is as follows. Has a glutathione-disulfide oxidoreductase activity in the presence of NADPH and glutathione reductase. Reduces low molecular weight disulfides and proteins. The sequence is that of Glutaredoxin (grxA) from Haemophilus influenzae (strain ATCC 51907 / DSM 11121 / KW20 / Rd).